The primary structure comprises 268 residues: Acidic leucine-rich nuclear phosphoprotein 32 family member E (268 aa).

Position 1 is an N-acetylmethionine (Met1). LRR repeat units follow at residues Glu18–Asn38, Glu43–Asn64, Lys65–Cys87, and Asn89–Gln110. Residue Lys68 forms a Glycyl lysine isopeptide (Lys-Gly) (interchain with G-Cter in SUMO2) linkage. Residues Cys123 to Glu161 form the LRRCT domain. Acidic residues-rich tracts occupy residues Asp149–Val216 and Ile226–Glu247. The segment at Asp149–Asp268 is disordered. The interval Glu215–Asp268 is ZID domain. Basic and acidic residues predominate over residues Gly248–Ala259.

The protein belongs to the ANP32 family. As to quaternary structure, interacts with the importin alpha KPNA1 and KPNA2. Component of a SWR1-like complex, composed of EP400, KAT5/TIP60, TRRAP, BRD8, RUVBL1, RUVBL2, ING3 and ANP32E; the complex does not contain SRCAP. Interacts with H2A.Z/H2AZ1. Phosphorylated. The phosphorylation is nuclear localization signal (NLS)-dependent. Expressed in peripheral blood leukocytes, colon, small intestine, prostate, thymus, spleen, skeletal muscle, liver and kidney.

Its subcellular location is the cytoplasm. The protein resides in the nucleus. In terms of biological role, histone chaperone that specifically mediates the genome-wide removal of histone H2A.Z/H2AZ1 from the nucleosome: removes H2A.Z/H2AZ1 from its normal sites of deposition, especially from enhancer and insulator regions. Not involved in deposition of H2A.Z/H2AZ1 in the nucleosome. May stabilize the evicted H2A.Z/H2AZ1-H2B dimer, thus shifting the equilibrium towards dissociation and the off-chromatin state. Inhibits activity of protein phosphatase 2A (PP2A). Does not inhibit protein phosphatase 1. May play a role in cerebellar development and synaptogenesis. This Homo sapiens (Human) protein is Acidic leucine-rich nuclear phosphoprotein 32 family member E (ANP32E).